Here is a 538-residue protein sequence, read N- to C-terminus: Atos homolog protein B (538 aa).

The span at 1–18 shows a compositional bias: low complexity; sequence MRHVQAEPSPSSEPEAGP. Disordered stretches follow at residues 1–103, 156–185, and 197–308; these read MRHV…GLLG, HTRDWASPDPGGHGSLGESPGPAPPGQLHT, and GGKS…PMGR. Residues 227–238 show a composition bias toward pro residues; sequence HTPPGPGPPGPC. Phosphoserine occurs at positions 254 and 255. The segment covering 274 to 286 has biased composition (polar residues); that stretch reads AANSSDAKATSFW. Residues 348-430 are required for macropage invasion; sequence LLGNFEESLL…VPKVGTVQVT (83 aa). The tract at residues 436–444 is transactivation domain 1 (TAD1); it reads QTVVKMFLV.

This sequence belongs to the ATOS family.

The protein resides in the nucleus. Its function is as follows. Transcription regulator that may syncronize transcriptional and translational programs. The polypeptide is Atos homolog protein B (Macaca fascicularis (Crab-eating macaque)).